The sequence spans 848 residues: Coiled-coil and C2 domain-containing protein 1B (848 aa).

Residues 1–10 (MPGPRPRKGP) are compositionally biased toward basic residues. 2 disordered regions span residues 1–21 (MPGP…ETAK) and 53–75 (ALTG…PLPM). The stretch at 165-193 (LQALLEERIRNYREAAASAKEAGEAAKAR) forms a coiled coil. 4 disordered regions span residues 217-276 (EDEI…DPDP), 326-353 (VDLS…ATQG), 433-460 (DFAE…QDSV), and 476-523 (ALVD…SPSV). Over residues 438–448 (PVPPGFPPIPG) the composition is skewed to pro residues. A Phosphoserine modification is found at Ser-455. A compositionally biased stretch (acidic residues) spans 476–485 (ALVDDDEESD). 2 stretches are compositionally biased toward low complexity: residues 487 to 498 (PAQAPLAKKPAQ) and 509 to 522 (EPKA…LSPS). Ser-583 is modified (phosphoserine). Position 586 is a phosphothreonine (Thr-586). The stretch at 600-626 (LRLSQKAEEVYAQLQKMLQEQQAKCLL) forms a coiled coil. Residues 666 to 805 (DPPSHHFELK…EKECEIREIM (140 aa)) enclose the C2 domain.

It belongs to the CC2D1 family. As to quaternary structure, interacts with CHMP4B.

It localises to the nucleus. In terms of biological role, transcription factor that binds specifically to the DRE (dual repressor element) and represses HTR1A gene transcription in neuronal cells. This chain is Coiled-coil and C2 domain-containing protein 1B (Cc2d1b), found in Mus musculus (Mouse).